Consider the following 200-residue polypeptide: Rubrerythrin (200 aa).

One can recognise a Ferritin-like diiron domain in the interval 12 to 155 (SIKGSKTEKH…ALLAHVEDGS (144 aa)). 10 residues coordinate Fe(3+): Glu29, Glu62, Glu103, Glu106, Glu137, His140, Cys167, Cys170, Cys183, and Cys186. Positions 162–200 (EIAWQCRNCGYVITSKKAPKLCPACAHPQAYFEPMKTNY) constitute a Rubredoxin-like domain.

Homodimer. Possesses two rubredoxin-like centers and two non-sulfur oxo-bridged di-iron centers per dimer. It depends on Fe(3+) as a cofactor.

It is found in the cytoplasm. Functionally, may provide oxidative stress protection via catalytic reduction of intracellular hydrogen peroxide. The chain is Rubrerythrin (rbr) from Porphyromonas gingivalis (strain ATCC BAA-308 / W83).